Reading from the N-terminus, the 269-residue chain is Membrane protein insertase YidC 1 (269 aa).

Positions 1–20 (MKKKFSLIAMAGAALLLLTA) are cleaved as a signal peptide. Residue C21 is the site of N-palmitoyl cysteine attachment. A lipid anchor (S-diacylglycerol cysteine) is attached at C21. 4 helical membrane-spanning segments follow: residues 45 to 65 (IRFL…TIVI), 124 to 144 (YMGC…YQAL), 165 to 185 (PTFI…YLMM), and 203 to 223 (PIFI…YWVI).

This sequence belongs to the OXA1/ALB3/YidC family. Type 2 subfamily.

It localises to the cell membrane. Functionally, required for the insertion and/or proper folding and/or complex formation of integral membrane proteins into the membrane. Involved in integration of membrane proteins that insert both dependently and independently of the Sec translocase complex, as well as at least some lipoproteins. The chain is Membrane protein insertase YidC 1 from Lactococcus lactis subsp. lactis (strain IL1403) (Streptococcus lactis).